The primary structure comprises 152 residues: ALK and LTK ligand 2 (152 aa).

The first 24 residues, 1–24 (MRGPGHPLLLGLLLVLGAAGRGRG), serve as a signal peptide directing secretion. 2 disulfides stabilise this stretch: C111-C147 and C125-C134.

Belongs to the ALKAL family. In terms of assembly, homodimer; interchain disulfide bond is not required for homodimerization. In terms of tissue distribution, widely expressed with highest levels in adrenal gland and modest levels in pancreas, testis and uterus.

It localises to the secreted. The protein localises to the cell membrane. Its function is as follows. Cytokine that acts as a physiological ligand for receptor tyrosine kinases LTK and ALK, leading to their activation. Cytokine-binding is sufficient to activate LTK. In contrast, ALKAL2-driven activation of ALK is coupled with heparin-binding to ALK. Stimulation of ALK signaling is involved in neural development and regulation of energy expenditure. This Homo sapiens (Human) protein is ALK and LTK ligand 2.